Reading from the N-terminus, the 679-residue chain is Protein hook (679 aa).

Residues 5-123 (NGMYYSLLEW…RLLQLVLGCA (119 aa)) enclose the Calponin-homology (CH) domain. A coiled-coil region spans residues 140-627 (EEELQANIMR…SKTKMSTMEE (488 aa)).

It belongs to the hook family. In terms of assembly, homodimer. Interacts with microtubules via its N-terminus.

It localises to the cytoplasm. Its subcellular location is the cytoskeleton. The protein localises to the endosome. The protein resides in the synapse. In terms of biological role, involved in endocytic trafficking by stabilizing organelles of the endocytic pathway. Probably acts as a cytoskeletal linker protein required to tether endosome vesicles to the cytoskeleton. Involved in modulation of endocytosis at stages required for down-regulation of membrane proteins that control synapse size. Not involved in synaptic vesicle recycling. Required in R7 cells for boss endocytosis into multivesicular bodies (MVBs). Has a role in regulating adult longevity. The protein is Protein hook of Drosophila mojavensis (Fruit fly).